Consider the following 607-residue polypeptide: Dolichyl-diphosphooligosaccharide--protein glycosyltransferase subunit 1 (607 aa).

A signal peptide spans 1–23 (MEAPAAGLFLLLLLGTWAPAPGS). Residues 24 to 438 (ASSEAPPLIN…TFNKVLMLQE (415 aa)) lie on the Lumenal side of the membrane. Lys187 is modified (N6-acetyllysine). N-linked (GlcNAc...) asparagine glycosylation is present at Asn299. Residues 439–457 (PLLVVAAFYILFFTVIIYV) form a helical membrane-spanning segment. Over 458–607 (RLDFSITKDP…TKIDHILDAL (150 aa)) the chain is Cytoplasmic. Position 538 is an N6-acetyllysine; alternate (Lys538). Residue Lys538 forms a Glycyl lysine isopeptide (Lys-Gly) (interchain with G-Cter in SUMO2); alternate linkage.

The protein belongs to the OST1 family. As to quaternary structure, component of the oligosaccharyltransferase (OST) complex. OST exists in two different complex forms which contain common core subunits RPN1, RPN2, OST48, OST4, DAD1 and TMEM258, either STT3A or STT3B as catalytic subunits, and form-specific accessory subunits. STT3A complex assembly occurs through the formation of 3 subcomplexes. Subcomplex 1 contains RPN1 and TMEM258, subcomplex 2 contains the STT3A-specific subunits STT3A, DC2/OSTC, and KCP2 as well as the core subunit OST4, and subcomplex 3 contains RPN2, DAD1, and OST48. The STT3A complex can form stable complexes with the Sec61 complex or with both the Sec61 and TRAP complexes. Interacts with TMEM35A/NACHO. Ubiquitinated by the ECS(ASB11) complex. Ubiquitinated by RNF128, leading to degradation in a proteasome/lysosome-dependent manner. Post-translationally, ufmylated by UFL1 in response to endoplasmic reticulum stress, promoting reticulophagy of endoplasmic reticulum sheets. Expressed in all tissues tested.

It localises to the endoplasmic reticulum membrane. The protein resides in the melanosome. It functions in the pathway protein modification; protein glycosylation. Functionally, subunit of the oligosaccharyl transferase (OST) complex that catalyzes the initial transfer of a defined glycan (Glc(3)Man(9)GlcNAc(2) in eukaryotes) from the lipid carrier dolichol-pyrophosphate to an asparagine residue within an Asn-X-Ser/Thr consensus motif in nascent polypeptide chains, the first step in protein N-glycosylation. N-glycosylation occurs cotranslationally and the complex associates with the Sec61 complex at the channel-forming translocon complex that mediates protein translocation across the endoplasmic reticulum (ER). All subunits are required for a maximal enzyme activity. The polypeptide is Dolichyl-diphosphooligosaccharide--protein glycosyltransferase subunit 1 (Homo sapiens (Human)).